We begin with the raw amino-acid sequence, 201 residues long: Small ribosomal subunit protein uS4c (201 aa).

The disordered stretch occupies residues 15–43 (LGALPGLTSKRPSPGSDLRNQSRSGKRSQ). Positions 89 to 150 (MRLDNILFRL…EQRSRALIQK (62 aa)) constitute an S4 RNA-binding domain.

Belongs to the universal ribosomal protein uS4 family. Part of the 30S ribosomal subunit. Contacts protein S5. The interaction surface between S4 and S5 is involved in control of translational fidelity.

The protein localises to the plastid. The protein resides in the chloroplast. Its function is as follows. One of the primary rRNA binding proteins, it binds directly to 16S rRNA where it nucleates assembly of the body of the 30S subunit. Functionally, with S5 and S12 plays an important role in translational accuracy. This is Small ribosomal subunit protein uS4c (rps4) from Ceratophyllum demersum (Rigid hornwort).